The sequence spans 739 residues: Tegument protein UL47 (739 aa).

Basic and acidic residues predominate over residues 1-13 (MDAARDGRPERRR). Disordered regions lie at residues 1–123 (MDAA…QDYL) and 154–198 (QFPP…DDAA). A Nuclear localization signal motif is present at residues 10 to 30 (ERRRAVSGTYRTHPFQRPSAR). The span at 28-53 (SARRSAGRPARCGRRGRGAPRVRRPR) shows a compositional bias: basic residues. Positions 62-87 (EDTSEDENVYDYIDGDSSDSADDYDS) are enriched in acidic residues. The short motif at 94–121 (RGPNHGAGDAMDTDAPPERAPEGGAPQD) is the Nuclear export signal element. The Nuclear export signal signature appears at 483 to 493 (LSAYLTLFVAL).

Belongs to the alphaherpesvirinae HHV-1 UL47 family. In terms of assembly, interacts with US3 kinase. Interacts with UL31 and UL34; these interactions seem important for efficient virion nuclear egress. Interacts with UL41/VHS. Interacts with host DDB1. Post-translationally, monoubiquitinated. In terms of processing, phosphorylated by US3. This phosphorylation is required for proper nuclear localization.

Its subcellular location is the virion tegument. It localises to the host nucleus. The protein resides in the host cytoplasm. Functionally, tegument protein that can bind to various RNA transcripts. Plays a role in the attenuation of selective viral and cellular mRNA degradation by modulating the activity of host shutoff RNase UL41/VHS. Also plays a role in the primary envelopment of virions in the perinuclear space, probably by interacting with two nuclear egress proteins UL31 and UL34. The protein is Tegument protein UL47 of Bovine herpesvirus 1.1 (strain Cooper) (BoHV-1).